A 197-amino-acid chain; its full sequence is Cell division protein SepF (197 aa).

The disordered stretch occupies residues 15-89; it reads EEEEVEGPEE…RMNNNSKNNS (75 aa). The span at 22–42 shows a compositional bias: basic and acidic residues; that stretch reads PEERESSRSRERVQEREDYNR. The span at 43-73 shows a compositional bias: polar residues; sequence NENQATPQTFNNKQQAIKSVPQKNTLRSNTT. A compositionally biased stretch (low complexity) spans 80 to 89; the sequence is RMNNNSKNNS.

This sequence belongs to the SepF family. Homodimer. Interacts with FtsZ.

It is found in the cytoplasm. In terms of biological role, cell division protein that is part of the divisome complex and is recruited early to the Z-ring. Probably stimulates Z-ring formation, perhaps through the cross-linking of FtsZ protofilaments. Its function overlaps with FtsA. This chain is Cell division protein SepF, found in Staphylococcus epidermidis (strain ATCC 35984 / DSM 28319 / BCRC 17069 / CCUG 31568 / BM 3577 / RP62A).